An 83-amino-acid polypeptide reads, in one-letter code: Keratin-associated protein 21-2 (83 aa).

Interacts with hair keratins.

In the hair cortex, hair keratin intermediate filaments are embedded in an interfilamentous matrix, consisting of hair keratin-associated proteins (KRTAP), which are essential for the formation of a rigid and resistant hair shaft through their extensive disulfide bond cross-linking with abundant cysteine residues of hair keratins. The matrix proteins include the high-sulfur and high-glycine-tyrosine keratins. The protein is Keratin-associated protein 21-2 (KRTAP21-2) of Homo sapiens (Human).